Here is a 598-residue protein sequence, read N- to C-terminus: CBP80/20-dependent translation initiation factor (598 aa).

The residue at position 1 (methionine 1) is an N-acetylmethionine. A compositionally biased stretch (low complexity) spans 1 to 18 (MENSSAASASSEAGSSRS). Disordered regions lie at residues 1 to 20 (MENS…RSQE), 43 to 90 (DKTE…SKDN), and 180 to 336 (IAHT…RIGE). The interaction with NCBP1/CBP80 stretch occupies residues 1 to 305 (MENSSAASAS…APRSPDTLAP (305 aa)). Residue serine 18 is modified to Phosphoserine. Positions 43 to 55 (DKTEGDGESERTQ) are enriched in basic and acidic residues. The segment covering 56 to 75 (SHISQWTADCSEPLDSSCSF) has biased composition (polar residues). The span at 183 to 198 (TKKLFRRRRNDRRRQQ) shows a compositional bias: basic residues. The segment covering 258–272 (PPGDKGEAGAHRNAK) has biased composition (basic and acidic residues). Threonine 289 is modified (phosphothreonine). At serine 299 the chain carries Phosphoserine. Residues 321–336 (VETKRKDSILPERIGE) are compositionally biased toward basic and acidic residues. An MIF4G domain is found at 376–577 (IEILNSMRNN…LEVIELHANS (202 aa)).

The protein belongs to the CTIF family. Interacts with NCBP1/CBP80; the interaction is direct. Associates with the eukaryotic translation initiation factor 3 (eIF-3) complex. As to expression, widely expressed.

The protein resides in the cytoplasm. It localises to the perinuclear region. Its function is as follows. Specifically required for the pioneer round of mRNA translation mediated by the cap-binding complex (CBC), that takes place during or right after mRNA export via the nuclear pore complex (NPC). Acts via its interaction with the NCBP1/CBP80 component of the CBC complex and recruits the 40S small subunit of the ribosome via eIF3. In contrast, it is not involved in steady state translation, that takes place when the CBC complex is replaced by cytoplasmic cap-binding protein eIF4E. Also required for nonsense-mediated mRNA decay (NMD), the pioneer round of mRNA translation mediated by the cap-binding complex playing a central role in nonsense-mediated mRNA decay (NMD). This Homo sapiens (Human) protein is CBP80/20-dependent translation initiation factor (CTIF).